The following is a 299-amino-acid chain: Recombination-associated protein RdgC (299 aa).

This sequence belongs to the RdgC family.

The protein resides in the cytoplasm. It localises to the nucleoid. Its function is as follows. May be involved in recombination. This chain is Recombination-associated protein RdgC, found in Bordetella parapertussis (strain 12822 / ATCC BAA-587 / NCTC 13253).